Here is a 161-residue protein sequence, read N- to C-terminus: Non-specific lipid transfer protein GPI-anchored 24 (161 aa).

Residues Met-1–Gly-23 form the signal peptide. 4 cysteine pairs are disulfide-bonded: Cys-42–Cys-79, Cys-49–Cys-63, Cys-64–Cys-104, and Cys-77–Cys-113. Asn-92 carries N-linked (GlcNAc...) asparagine glycosylation. Residue Asp-138 is the site of GPI-anchor amidated aspartate attachment. A propeptide spans Ala-139–Tyr-161 (removed in mature form).

Belongs to the plant LTP family.

The protein resides in the cell membrane. Its function is as follows. Probable lipid transfer protein. This is Non-specific lipid transfer protein GPI-anchored 24 from Arabidopsis thaliana (Mouse-ear cress).